Reading from the N-terminus, the 581-residue chain is Putative aluminum-activated malate transporter 3 (581 aa).

6 helical membrane-spanning segments follow: residues 98–118, 122–142, 148–164, 167–187, 201–218, and 231–251; these read MGLALTLTSILIFFKIPGLEL, YLWAILTVVVIFEFSIGATFS, GLGTLSAGGLALGMSWI, MTGNWADVFNAASIFVVAFFA, YGFRVFLLTYCYVIVSGY, and FLLIALGASVGLIVNTCIYPI.

The protein belongs to the aromatic acid exporter (TC 2.A.85) family.

The protein localises to the membrane. Functionally, malate transporter. The protein is Putative aluminum-activated malate transporter 3 (ALMT3) of Arabidopsis thaliana (Mouse-ear cress).